Consider the following 545-residue polypeptide: Thermosome subunit (545 aa).

It belongs to the TCP-1 chaperonin family. In terms of assembly, forms an oligomeric complex of eight-membered rings.

Molecular chaperone; binds unfolded polypeptides in vitro, and has a weak ATPase activity. The sequence is that of Thermosome subunit (ths) from Methanopyrus kandleri (strain AV19 / DSM 6324 / JCM 9639 / NBRC 100938).